A 692-amino-acid polypeptide reads, in one-letter code: Polyphosphate kinase (692 aa).

Asn-57 lines the ATP pocket. Residues Arg-383 and Arg-413 each contribute to the Mg(2+) site. His-443 (phosphohistidine intermediate) is an active-site residue. ATP contacts are provided by Tyr-476, Arg-572, and His-600.

Belongs to the polyphosphate kinase 1 (PPK1) family. Mg(2+) is required as a cofactor. In terms of processing, an intermediate of this reaction is the autophosphorylated ppk in which a phosphate is covalently linked to a histidine residue through a N-P bond.

It carries out the reaction [phosphate](n) + ATP = [phosphate](n+1) + ADP. Catalyzes the reversible transfer of the terminal phosphate of ATP to form a long-chain polyphosphate (polyP). The sequence is that of Polyphosphate kinase from Acinetobacter baumannii (strain AYE).